A 401-amino-acid chain; its full sequence is Tetracycline resistance protein, class B (401 aa).

The Cytoplasmic portion of the chain corresponds to 1-6; the sequence is MNSSTK. Residues 7-30 form a helical membrane-spanning segment; the sequence is IALVITLLDAMGIGLIMPVLPTLL. Over 31–42 the chain is Periplasmic; it reads REFIASEDIANH. The helical transmembrane segment at 43–61 threads the bilayer; the sequence is FGVLLALYALMQVIFAPWL. At 62-71 the chain is on the cytoplasmic side; it reads GKMSDRFGRR. The helical transmembrane segment at 72 to 91 threads the bilayer; that stretch reads PVLLLSLIGASLDYLLLAFS. Topologically, residues 92–98 are periplasmic; sequence SALWMLY. Residues 99-119 form a helical membrane-spanning segment; the sequence is LGRLLSGITGATGAVAASVIA. Residues 120–129 are Cytoplasmic-facing; sequence DTTSASQRVK. Residues 130–152 form a helical membrane-spanning segment; that stretch reads WFGWLGASFGLGLIAGPIIGGFA. Residues 153–158 are Periplasmic-facing; sequence GEISPH. A helical transmembrane segment spans residues 159–178; that stretch reads SPFFIAALLNIVTFLVVMFW. The Cytoplasmic segment spans residues 179 to 211; the sequence is FRETKNTRDNTDTEVGVETQSNSVYITLFKTMP. Residues 212–232 traverse the membrane as a helical segment; the sequence is ILLIIYFSAQLIGQIPATVWV. Residues 233–243 lie on the Periplasmic side of the membrane; that stretch reads LFTENRFGWNS. Residues 244–265 traverse the membrane as a helical segment; the sequence is MMVGFSLAGLGLLHSVFQAFVA. The Cytoplasmic portion of the chain corresponds to 266 to 275; the sequence is GRIATKWGEK. The helical transmembrane segment at 276–295 threads the bilayer; the sequence is TAVLLGFIADSSAFAFLAFI. At 296-298 the chain is on the periplasmic side; the sequence is SEG. The helical transmembrane segment at 299 to 322 threads the bilayer; the sequence is WLVFPVLILLAGGGIALPALQGVM. The Cytoplasmic portion of the chain corresponds to 323 to 332; it reads SIQTKSHQQG. The helical transmembrane segment at 333–356 threads the bilayer; it reads ALQGLLVSLTNATGVIGPLLFAVI. Over 357-365 the chain is Periplasmic; the sequence is YNHSLPIWD. A helical membrane pass occupies residues 366 to 387; the sequence is GWIWIIGLAFYCIIILLSMTFM. The Cytoplasmic segment spans residues 388–401; it reads LTPQAQGSKQETSA.

It belongs to the major facilitator superfamily. TCR/Tet family.

The protein resides in the cell inner membrane. Functionally, resistance to tetracycline by an active tetracycline efflux. This is an energy-dependent process that decreases the accumulation of the antibiotic in whole cells. This protein functions as a metal-tetracycline/H(+) antiporter. The protein is Tetracycline resistance protein, class B (tetA) of Escherichia coli.